A 462-amino-acid polypeptide reads, in one-letter code: SET domain-containing protein SmydA-8, isoform A (462 aa).

Positions 55-287 (PNWTISSSTV…KGGEITTTYT (233 aa)) constitute an SET domain.

It belongs to the class V-like SAM-binding methyltransferase superfamily.

This is SET domain-containing protein SmydA-8, isoform A from Drosophila melanogaster (Fruit fly).